The chain runs to 280 residues: Golgi phosphoprotein 3-like B (280 aa).

The disordered stretch occupies residues 1-32 (MTTLIRRGRRAEEGQERRADSEDSIKDKDEED). Basic and acidic residues predominate over residues 10-32 (RAEEGQERRADSEDSIKDKDEED). The a 1,2-diacyl-sn-glycero-3-phospho-(1D-myo-inositol 4-phosphate) site is built by Trp-62, Arg-71, Arg-152, and Arg-155. The segment at 171–182 (EKQNFLLFDMTT) is beta-hairpin required for oligomerization.

Belongs to the GOLPH3/VPS74 family. Homooligomer.

The protein resides in the golgi apparatus. It is found in the golgi stack membrane. It localises to the trans-Golgi network membrane. Functionally, phosphatidylinositol-4-phosphate-binding protein that may play a role in the process of vesicle budding at the Golgi and anterograde transport to the plasma membrane. The protein is Golgi phosphoprotein 3-like B (golph3l-b) of Xenopus laevis (African clawed frog).